The following is a 172-amino-acid chain: NADH-quinone oxidoreductase subunit B 1 (172 aa).

Cys42, Cys43, Cys107, and Cys137 together coordinate [4Fe-4S] cluster.

Belongs to the complex I 20 kDa subunit family. In terms of assembly, NDH-1 is composed of 14 different subunits. Subunits NuoB, C, D, E, F, and G constitute the peripheral sector of the complex. Requires [4Fe-4S] cluster as cofactor.

It is found in the cell inner membrane. It catalyses the reaction a quinone + NADH + 5 H(+)(in) = a quinol + NAD(+) + 4 H(+)(out). Functionally, NDH-1 shuttles electrons from NADH, via FMN and iron-sulfur (Fe-S) centers, to quinones in the respiratory chain. Couples the redox reaction to proton translocation (for every two electrons transferred, four hydrogen ions are translocated across the cytoplasmic membrane), and thus conserves the redox energy in a proton gradient. The chain is NADH-quinone oxidoreductase subunit B 1 from Anaeromyxobacter sp. (strain Fw109-5).